Reading from the N-terminus, the 220-residue chain is Nucleolar protein 12 (220 aa).

The stretch at 31–86 (HKRKMQRRKTAVEEIKRKIKEEQKKMKEERHKEYMKMLKEREEALCELEENDELEE) forms a coiled coil. The segment at 109 to 220 (ISDLDLSGIR…QTGKTRRRRN (112 aa)) is disordered. Residues 139 to 148 (EKGADEEKPK) are compositionally biased toward basic and acidic residues. Composition is skewed to basic residues over residues 176–186 (RSQRKSGKRPS) and 205–220 (KTQR…RRRN).

Belongs to the RRP17 family.

Its subcellular location is the nucleus. The protein resides in the nucleolus. In terms of biological role, may bind to rRNA. The chain is Nucleolar protein 12 (nol12) from Xenopus laevis (African clawed frog).